Reading from the N-terminus, the 561-residue chain is Dihydroxy-acid dehydratase (561 aa).

Cysteine 51 provides a ligand contact to [2Fe-2S] cluster. Mg(2+) is bound at residue aspartate 83. Cysteine 124 contributes to the [2Fe-2S] cluster binding site. Mg(2+) contacts are provided by aspartate 125 and lysine 126. Position 126 is an N6-carboxylysine (lysine 126). Cysteine 196 lines the [2Fe-2S] cluster pocket. Glutamate 448 serves as a coordination point for Mg(2+). Catalysis depends on serine 474, which acts as the Proton acceptor.

The protein belongs to the IlvD/Edd family. In terms of assembly, homodimer. [2Fe-2S] cluster is required as a cofactor. The cofactor is Mg(2+).

It catalyses the reaction (2R)-2,3-dihydroxy-3-methylbutanoate = 3-methyl-2-oxobutanoate + H2O. The enzyme catalyses (2R,3R)-2,3-dihydroxy-3-methylpentanoate = (S)-3-methyl-2-oxopentanoate + H2O. It participates in amino-acid biosynthesis; L-isoleucine biosynthesis; L-isoleucine from 2-oxobutanoate: step 3/4. Its pathway is amino-acid biosynthesis; L-valine biosynthesis; L-valine from pyruvate: step 3/4. In terms of biological role, functions in the biosynthesis of branched-chain amino acids. Catalyzes the dehydration of (2R,3R)-2,3-dihydroxy-3-methylpentanoate (2,3-dihydroxy-3-methylvalerate) into 2-oxo-3-methylpentanoate (2-oxo-3-methylvalerate) and of (2R)-2,3-dihydroxy-3-methylbutanoate (2,3-dihydroxyisovalerate) into 2-oxo-3-methylbutanoate (2-oxoisovalerate), the penultimate precursor to L-isoleucine and L-valine, respectively. This is Dihydroxy-acid dehydratase from Pyrobaculum neutrophilum (strain DSM 2338 / JCM 9278 / NBRC 100436 / V24Sta) (Thermoproteus neutrophilus).